Here is a 203-residue protein sequence, read N- to C-terminus: Mpv17-like protein (203 aa).

Residues 1 to 12 (MRILIQFTKRHP) are Cytoplasmic-facing. Residues 13–30 (WLTNVTIYGSLFASADIV) traverse the membrane as a helical segment. Topologically, residues 31-49 (QQKLSKSPTEPIDFKQTAK) are lumenal. Residues 50–69 (VGLVGFCFHANFNFFWLRFI) traverse the membrane as a helical segment. The Cytoplasmic segment spans residues 70-89 (ERTFPGSAPLNVIRKVACDQ). A helical membrane pass occupies residues 90-107 (LMAAPITISAFYTGLSLL). Residues 108–143 (DGERDVFKNLKEKFWPTYKTGVMCWTVFQTINFSVI) are Lumenal-facing. A helical transmembrane segment spans residues 144-166 (PPFVRTAYIGVCAFLWTTFLCYI). The Cytoplasmic portion of the chain corresponds to 167–203 (RNRDINEVTTRLLHAVPNIRGKMAFPQDQDDNKPADK).

The protein belongs to the peroxisomal membrane protein PXMP2/4 family.

Its subcellular location is the peroxisome membrane. Participates in reactive oxygen species metabolism by up- or down-regulation of the genes of antioxidant enzymes. Protective against the mitochondrial apoptotic cascade. The protein is Mpv17-like protein (mpv17l) of Xenopus laevis (African clawed frog).